The primary structure comprises 49 residues: Large ribosomal subunit protein bL33 (49 aa).

The protein belongs to the bacterial ribosomal protein bL33 family.

The protein is Large ribosomal subunit protein bL33 of Leuconostoc citreum (strain KM20).